Here is a 185-residue protein sequence, read N- to C-terminus: uncharacterized protein (185 aa).

The G domain occupies 17–137 (GKSSIMNALF…QKPIIVVINK (121 aa)).

This is an uncharacterized protein from Methanocaldococcus jannaschii (strain ATCC 43067 / DSM 2661 / JAL-1 / JCM 10045 / NBRC 100440) (Methanococcus jannaschii).